Reading from the N-terminus, the 424-residue chain is L-threonine:uridine-5'-aldehyde transaldolase (424 aa).

At lysine 235 the chain carries N6-(pyridoxal phosphate)lysine.

This sequence belongs to the SHMT family. Pyridoxal 5'-phosphate serves as cofactor.

It catalyses the reaction uridine-5'-aldehyde + L-threonine = (5'S,6'S)-C-glycyluridine + acetaldehyde. It functions in the pathway antibiotic biosynthesis. Functionally, transaldolase involved in the biosynthesis of the lipopeptidyl nucleoside antibiotic A-90289. Catalyzes the condensation of L-threonine and uridine-5'-aldehyde to form 5'-C-glycyluridine (GlyU). Forms (5'S,6'S)-GlyU. Has no activity with alternative amino acids, such as glycine or serine. In Streptomyces sp, this protein is L-threonine:uridine-5'-aldehyde transaldolase.